We begin with the raw amino-acid sequence, 117 residues long: Large ribosomal subunit protein uL18 (117 aa).

It belongs to the universal ribosomal protein uL18 family. In terms of assembly, part of the 50S ribosomal subunit; part of the 5S rRNA/L5/L18/L25 subcomplex. Contacts the 5S and 23S rRNAs.

Its function is as follows. This is one of the proteins that bind and probably mediate the attachment of the 5S RNA into the large ribosomal subunit, where it forms part of the central protuberance. This Vibrio campbellii (strain ATCC BAA-1116) protein is Large ribosomal subunit protein uL18.